A 273-amino-acid polypeptide reads, in one-letter code: HTH-type transcriptional activator RhaS (273 aa).

Residues 174–272 enclose the HTH araC/xylS-type domain; sequence YQLLDWLQNN…SQSPRDLRSQ (99 aa). 2 DNA-binding regions (H-T-H motif) span residues 191 to 212 and 239 to 262; these read PELADRFALPLRTLHRQLKNKT and VTDIAYLCGFGDSNHFSTLFKREF.

As to quaternary structure, binds DNA as a dimer.

Its subcellular location is the cytoplasm. Activates expression of the rhaBAD and rhaT operons. This Yersinia pseudotuberculosis serotype I (strain IP32953) protein is HTH-type transcriptional activator RhaS.